We begin with the raw amino-acid sequence, 269 residues long: Bis(5'-nucleosyl)-tetraphosphatase, symmetrical (269 aa).

This sequence belongs to the Ap4A hydrolase family.

It carries out the reaction P(1),P(4)-bis(5'-adenosyl) tetraphosphate + H2O = 2 ADP + 2 H(+). Functionally, hydrolyzes diadenosine 5',5'''-P1,P4-tetraphosphate to yield ADP. This is Bis(5'-nucleosyl)-tetraphosphatase, symmetrical from Vibrio cholerae serotype O1 (strain ATCC 39541 / Classical Ogawa 395 / O395).